Reading from the N-terminus, the 504-residue chain is Maturase K (504 aa).

Belongs to the intron maturase 2 family. MatK subfamily.

Its subcellular location is the plastid. It localises to the chloroplast. Usually encoded in the trnK tRNA gene intron. Probably assists in splicing its own and other chloroplast group II introns. The protein is Maturase K of Arabidopsis lyrata (Lyre-leaved rock-cress).